A 227-amino-acid polypeptide reads, in one-letter code: 7-cyano-7-deazaguanine synthase (227 aa).

9-19 lines the ATP pocket; sequence LSGGLDSATVL. Residues C189, C199, C202, and C205 each contribute to the Zn(2+) site.

The protein belongs to the QueC family. Requires Zn(2+) as cofactor.

It carries out the reaction 7-carboxy-7-deazaguanine + NH4(+) + ATP = 7-cyano-7-deazaguanine + ADP + phosphate + H2O + H(+). The protein operates within purine metabolism; 7-cyano-7-deazaguanine biosynthesis. Catalyzes the ATP-dependent conversion of 7-carboxy-7-deazaguanine (CDG) to 7-cyano-7-deazaguanine (preQ(0)). In Cupriavidus necator (strain ATCC 17699 / DSM 428 / KCTC 22496 / NCIMB 10442 / H16 / Stanier 337) (Ralstonia eutropha), this protein is 7-cyano-7-deazaguanine synthase.